We begin with the raw amino-acid sequence, 263 residues long: ATP synthase subunit a (263 aa).

A propeptide spans 1–14 (MYLNNNNNMKYYIN) (removed in mature form). 6 helical membrane-spanning segments follow: residues 35-57 (FSFI…ILTM), 95-117 (VWGY…NLIS), 129-151 (VVFV…FYTH), 156-178 (FGLF…IELL), 191-213 (LSAN…FNLM), and 228-250 (IAIL…VWCI).

It belongs to the ATPase A chain family. F-type ATPases have 2 components, CF(1) - the catalytic core - and CF(0) - the membrane proton channel. In yeast, the dimeric form of ATP synthase consists of 18 polypeptides: alpha, beta, gamma, delta, epsilon, 4 (B), 5 (OSCP), 6 (A), 8, 9 (C), d, E (Tim11), f, g, h, i, j and k.

It localises to the mitochondrion inner membrane. Functionally, mitochondrial membrane ATP synthase (F(1)F(0) ATP synthase or Complex V) produces ATP from ADP in the presence of a proton gradient across the membrane which is generated by electron transport complexes of the respiratory chain. F-type ATPases consist of two structural domains, F(1) - containing the extramembraneous catalytic core and F(0) - containing the membrane proton channel, linked together by a central stalk and a peripheral stalk. During catalysis, ATP synthesis in the catalytic domain of F(1) is coupled via a rotary mechanism of the central stalk subunits to proton translocation. Key component of the proton channel; it may play a direct role in the translocation of protons across the membrane. The chain is ATP synthase subunit a (ATP6) from Eremothecium gossypii (strain ATCC 10895 / CBS 109.51 / FGSC 9923 / NRRL Y-1056) (Yeast).